The following is an 80-amino-acid chain: Large ribosomal subunit protein uL24 (80 aa).

The protein belongs to the universal ribosomal protein uL24 family. In terms of assembly, part of the 50S ribosomal subunit.

Its function is as follows. One of two assembly initiator proteins, it binds directly to the 5'-end of the 23S rRNA, where it nucleates assembly of the 50S subunit. Functionally, one of the proteins that surrounds the polypeptide exit tunnel on the outside of the subunit. The chain is Large ribosomal subunit protein uL24 from Chlorobium phaeobacteroides (strain BS1).